The chain runs to 363 residues: Chalcone synthase B (363 aa).

The active site involves Cys170.

The protein belongs to the thiolase-like superfamily. Chalcone/stilbene synthases family.

It catalyses the reaction (E)-4-coumaroyl-CoA + 3 malonyl-CoA + 3 H(+) = 2',4,4',6'-tetrahydroxychalcone + 3 CO2 + 4 CoA. The protein operates within secondary metabolite biosynthesis; flavonoid biosynthesis. Its function is as follows. The primary product of this enzyme is 4,2',4',6'-tetrahydroxychalcone (also termed naringenin-chalcone or chalcone) which can under specific conditions spontaneously isomerize into naringenin. The chain is Chalcone synthase B (CHSB) from Ipomoea nil (Japanese morning glory).